A 255-amino-acid polypeptide reads, in one-letter code: 14-3-3 protein 5 (255 aa).

It belongs to the 14-3-3 family. As to quaternary structure, homodimer.

The sequence is that of 14-3-3 protein 5 (TFT5) from Solanum lycopersicum (Tomato).